We begin with the raw amino-acid sequence, 667 residues long: Receptor for retinol uptake STRA6 (667 aa).

Polar residues predominate over residues methionine 1 to glycine 13. Residues methionine 1–tyrosine 20 form a disordered region. Topologically, residues methionine 1 to glycine 50 are extracellular. N-linked (GlcNAc...) asparagine glycosylation occurs at asparagine 8. A helical transmembrane segment spans residues leucine 51–valine 71. The Cytoplasmic segment spans residues arginine 72 to arginine 100. Residues alanine 101–glutamate 121 form a helical membrane-spanning segment. Residues aspartate 122 to glycine 144 lie on the Extracellular side of the membrane. A helical membrane pass occupies residues alanine 145–alanine 165. The Cytoplasmic segment spans residues threonine 166–glycine 168. Residues histidine 169–tryptophan 189 form a helical membrane-spanning segment. Residues glutamine 190–serine 205 lie on the Extracellular side of the membrane. Residues leucine 206 to glutamine 226 form a helical membrane-spanning segment. At leucine 227–lysine 295 the chain is on the cytoplasmic side. The interval threonine 235 to proline 293 is interaction with RBP1. Residues leucine 296 to valine 316 form a helical membrane-spanning segment. At glycine 317–isoleucine 367 the chain is on the extracellular side. The helical transmembrane segment at serine 368 to histidine 388 threads the bilayer. Over arginine 389–serine 422 the chain is Cytoplasmic. Residues phenylalanine 423–phenylalanine 443 form a helical membrane-spanning segment. At leucine 444–tryptophan 473 the chain is on the extracellular side. A helical membrane pass occupies residues proline 474–phenylalanine 494. The Cytoplasmic portion of the chain corresponds to leucine 495–valine 509. The helical intramembrane region spans leucine 510–methionine 547. The Cytoplasmic segment spans residues aspartate 548–proline 667. Tyrosine 643 is subject to Phosphotyrosine.

As to quaternary structure, homodimer. Interacts with JAK2 and STAT5. Interacts (via extracellular domains) with RBP4. Interacts (via cytoplasmic domains) with RBP1. In terms of processing, phosphorylated on tyrosine residues in response to RBP4 binding. Phosphorylation requires the presence of LRAT, suggesting it may be triggered by the uptake of retinol that is then metabolized within the cell to retinoids that function as signaling molecules. Broad expression. In adult eye expressed in sclera, retina, retinal pigment epithelium, and trabecular meshwork but not in choroid and iris.

It localises to the cell membrane. In terms of biological role, functions as a retinol transporter. Accepts all-trans retinol from the extracellular retinol-binding protein RBP4, facilitates retinol transport across the cell membrane, and then transfers retinol to the cytoplasmic retinol-binding protein RBP1. Retinol uptake is enhanced by LRAT, an enzyme that converts retinol to all-trans retinyl esters, the storage forms of vitamin A. Contributes to the activation of a signaling cascade that depends on retinol transport and LRAT-dependent generation of retinol metabolites that then trigger activation of JAK2 and its target STAT5, and ultimately increase the expression of SOCS3 and inhibit cellular responses to insulin. Important for the homeostasis of vitamin A and its derivatives, such as retinoic acid. STRA6-mediated transport is particularly important in the eye, and under conditions of dietary vitamin A deficiency. Does not transport retinoic acid. The polypeptide is Receptor for retinol uptake STRA6 (STRA6) (Homo sapiens (Human)).